The primary structure comprises 364 residues: Tyrosine-protein phosphatase YVH1 (364 aa).

In terms of domain architecture, Tyrosine-protein phosphatase spans 11–173; that stretch reads EVTRILGGIY…LHLFEKMGGD (163 aa). C117 (phosphocysteine intermediate) is an active-site residue. S196 is modified (phosphoserine).

The protein belongs to the protein-tyrosine phosphatase family. Non-receptor class dual specificity subfamily.

It catalyses the reaction O-phospho-L-tyrosyl-[protein] + H2O = L-tyrosyl-[protein] + phosphate. May be directly involved in signal transduction and/or cell cycle regulation. It is necessary for maintaining growth rate or spore germination. Could show both activity toward tyrosine-protein phosphate as well as with serine-protein phosphate. In Saccharomyces cerevisiae (strain ATCC 204508 / S288c) (Baker's yeast), this protein is Tyrosine-protein phosphatase YVH1 (YVH1).